Here is a 65-residue protein sequence, read N- to C-terminus: Photosystem II reaction center protein J (65 aa).

The chain crosses the membrane as a helical span at residues 35–55; it reads LWLVATAGGIAVIFVLGIFFY.

It belongs to the PsbJ family. As to quaternary structure, PSII is composed of 1 copy each of membrane proteins PsbA, PsbB, PsbC, PsbD, PsbE, PsbF, PsbH, PsbI, PsbJ, PsbK, PsbL, PsbM, PsbT, PsbX, PsbY, Psb30/Ycf12, peripheral proteins PsbO, CyanoQ (PsbQ), PsbU, PsbV and a large number of cofactors. It forms dimeric complexes.

The protein resides in the cellular thylakoid membrane. Its function is as follows. One of the components of the core complex of photosystem II (PSII). PSII is a light-driven water:plastoquinone oxidoreductase that uses light energy to abstract electrons from H(2)O, generating O(2) and a proton gradient subsequently used for ATP formation. It consists of a core antenna complex that captures photons, and an electron transfer chain that converts photonic excitation into a charge separation. In Prochlorococcus marinus (strain MIT 9312), this protein is Photosystem II reaction center protein J.